The following is a 178-amino-acid chain: UPF0302 protein BCAH187_A1683 (178 aa).

Belongs to the UPF0302 family.

The protein is UPF0302 protein BCAH187_A1683 of Bacillus cereus (strain AH187).